Reading from the N-terminus, the 467-residue chain is UPF0236 protein TTE0610/TTE0881/TTE1053/TTE2432 (467 aa).

This sequence belongs to the UPF0236 family.

The polypeptide is UPF0236 protein TTE0610/TTE0881/TTE1053/TTE2432 (Caldanaerobacter subterraneus subsp. tengcongensis (strain DSM 15242 / JCM 11007 / NBRC 100824 / MB4) (Thermoanaerobacter tengcongensis)).